A 97-amino-acid polypeptide reads, in one-letter code: Protein C4 (97 aa).

Disordered stretches follow at residues 1 to 31 and 75 to 97; these read MGLLTCMFSSNSKESSSVRIKDSSISHPHTG and ANLPTTHMPRQSIQGPKLRPSIY. The N-myristoyl glycine; by host moiety is linked to residue glycine 2. Over residues 77–88 the composition is skewed to polar residues; that stretch reads LPTTHMPRQSIQ.

This sequence belongs to the geminiviridae protein AC4/C4 family.

It is found in the host cell membrane. In terms of biological role, pathogenicity determinant. May act as a suppressor of RNA-mediated gene silencing, also known as post-transcriptional gene silencing (PTGS), a mechanism of plant viral defense that limits the accumulation of viral RNAs. This Tomato yellow leaf curl China virus (TYLCCNV) protein is Protein C4.